Consider the following 176-residue polypeptide: uncharacterized protein (176 aa).

This is an uncharacterized protein from Methanocaldococcus jannaschii (strain ATCC 43067 / DSM 2661 / JAL-1 / JCM 10045 / NBRC 100440) (Methanococcus jannaschii).